Reading from the N-terminus, the 484-residue chain is MTATFAGIDATKHLIGGQWVEGNSDRISTNINPYDDSVIAESKQASIADVDAAYEAAKKAQAEWAATPAAERSAIIYRAAELLEEHREEIVEWLIKESGSTRSKANLEITLAGNITKESASFPGRVHGRISPSNTPGKENRVYRVAKGVVGVISPWNFPLNLSIRSVAPALAVGNAVVIKPASDTPVTGGVIPARIFEEAGVPAGVISTVAGAGSEIGDHFVTHAVPKLISFTGSTPVGRRVGELAINGGPMKTVALELGGNAPFVVLADADIDAAAQAAAVGAFLHQGQICMSINRVIVDAAVHDEFLEKFVEAVKNIPTGDPSAEGTLVGPVINDSQLSGLKEKIELAKKEGATVQVEGPIEGRLVHPHVFSDVTSDMEIAREEIFGPLISVLKADDEAHAAELANASDFGLSAAVWSKDIDRAAQFALQIDSGMVHINDLTVNDEPHVMFGGSKNSGLGRFNGDWAIEEFTTDRWIGIKRS.

Residues 156 to 157, 180 to 183, and 234 to 235 contribute to the NADP(+) site; these read WN, KPAS, and GS. Residues Lys180 and 234-239 contribute to the NAD(+) site; that span reads GSTPVG. Glu258 functions as the Proton acceptor in the catalytic mechanism. Leu259 lines the NADP(+) pocket. Cys292 serves as the catalytic Nucleophile. Positions 339 and 386 each coordinate NAD(+). Residue Glu386 participates in NADP(+) binding.

Belongs to the aldehyde dehydrogenase family. In terms of assembly, exists as a homodimer, homotrimer and homotetramer.

It catalyses the reaction vanillin + NAD(+) + H2O = vanillate + NADH + 2 H(+). The catalysed reaction is vanillin + NADP(+) + H2O = vanillate + NADPH + 2 H(+). The enzyme catalyses 3,4-dihydroxybenzaldehyde + NAD(+) + H2O = 3,4-dihydroxybenzoate + NADH + 2 H(+). It carries out the reaction 3,4-dihydroxybenzaldehyde + NADP(+) + H2O = 3,4-dihydroxybenzoate + NADPH + 2 H(+). It catalyses the reaction 4-hydroxybenzaldehyde + NAD(+) + H2O = 4-hydroxybenzoate + NADH + 2 H(+). The catalysed reaction is 4-hydroxybenzaldehyde + NADP(+) + H2O = 4-hydroxybenzoate + NADPH + 2 H(+). Its function is as follows. Catalyzes oxidation of vanillin to vanillate. Also oxidizes 3,4-dihydroxybenzaldehyde and 4-hydroxybenzaldehyde significantly. Other aromatic aldehyde substrates in the order of decreasing activity include 3-hydroxybenzaldehyde, 4-nitrobenzaldehyde, terephthalaldehyde, 2,4-dichlorobenzaldehyde, benzaldehyde and 3-phenylpropanal. Low activity with phthalaldehyde, cinnamaldehyde and syringaldehyde. No activity with phenylacetaldehyde, formaldehyde or aldehyde. Active with both NAD(+) and NADP(+). Involved in the degradation pathway of lignin-derived aromatic compounds of plant cell walls. Catalyzes the conversion of vanillin to vanillate due to toxicity of vanillin to the cells. The chain is Vanillin dehydrogenase from Corynebacterium glutamicum (strain ATCC 13032 / DSM 20300 / JCM 1318 / BCRC 11384 / CCUG 27702 / LMG 3730 / NBRC 12168 / NCIMB 10025 / NRRL B-2784 / 534).